We begin with the raw amino-acid sequence, 63 residues long: Large ribosomal subunit protein uL30 (63 aa).

This sequence belongs to the universal ribosomal protein uL30 family. In terms of assembly, part of the 50S ribosomal subunit.

The protein is Large ribosomal subunit protein uL30 of Granulibacter bethesdensis (strain ATCC BAA-1260 / CGDNIH1).